The chain runs to 100 residues: Small ribosomal subunit protein uS14c (100 aa).

The protein belongs to the universal ribosomal protein uS14 family. In terms of assembly, part of the 30S ribosomal subunit.

It is found in the plastid. Its subcellular location is the chloroplast. Its function is as follows. Binds 16S rRNA, required for the assembly of 30S particles. This is Small ribosomal subunit protein uS14c from Chlamydomonas reinhardtii (Chlamydomonas smithii).